A 790-amino-acid chain; its full sequence is Serine/threonine-protein kinase DCLK3 (790 aa).

A disordered region spans residues 1 to 37 (MPAAPVLRPPPPPATPAPPAPSRPAPPIPGHRGPCDH). Residues 7–29 (LRPPPPPATPAPPAPSRPAPPIP) show a composition bias toward pro residues. In terms of domain architecture, Doublecortin spans 97–183 (RVVTVVKLGG…KEPLTLKSIQ (87 aa)). Positions 201-218 (HSRVPSPRLRSRLPSKLL) are enriched in low complexity. Disordered regions lie at residues 201–290 (HSRV…SGEK) and 315–506 (LQLG…KGII). Composition is skewed to basic and acidic residues over residues 332 to 345 (DLGR…EKLV), 352 to 400 (RPSE…ESQD), 425 to 434 (IDMRREDRHT), and 457 to 496 (TRGE…ERPS). Residues 514–771 (YDIGGVIGDG…AEQVLQHPWI (258 aa)) enclose the Protein kinase domain. ATP contacts are provided by residues 520–528 (IGDGNFATV) and Lys543. Asp635 functions as the Proton acceptor in the catalytic mechanism.

Belongs to the protein kinase superfamily. CAMK Ser/Thr protein kinase family. CaMK subfamily. As to expression, highly expressed in brain and to a lower extent in liver and kidney.

It is found in the cytoplasm. It localises to the nucleus. It catalyses the reaction L-seryl-[protein] + ATP = O-phospho-L-seryl-[protein] + ADP + H(+). The enzyme catalyses L-threonyl-[protein] + ATP = O-phospho-L-threonyl-[protein] + ADP + H(+). The chain is Serine/threonine-protein kinase DCLK3 (Dclk3) from Mus musculus (Mouse).